The chain runs to 441 residues: Ribosomal protein uS12 methylthiotransferase RimO (441 aa).

One can recognise an MTTase N-terminal domain in the interval 8–118 (PKIGFVSLGC…VLEHVHHYVP (111 aa)). The [4Fe-4S] cluster site is built by Cys-17, Cys-53, Cys-82, Cys-150, Cys-154, and Cys-157. One can recognise a Radical SAM core domain in the interval 136–373 (LTPRHYAYLK…MQLQQQISAE (238 aa)). Positions 376 to 441 (QEKVGREILV…DEYDLWGSRV (66 aa)) constitute a TRAM domain.

Belongs to the methylthiotransferase family. RimO subfamily. [4Fe-4S] cluster is required as a cofactor.

The protein resides in the cytoplasm. The catalysed reaction is L-aspartate(89)-[ribosomal protein uS12]-hydrogen + (sulfur carrier)-SH + AH2 + 2 S-adenosyl-L-methionine = 3-methylsulfanyl-L-aspartate(89)-[ribosomal protein uS12]-hydrogen + (sulfur carrier)-H + 5'-deoxyadenosine + L-methionine + A + S-adenosyl-L-homocysteine + 2 H(+). Functionally, catalyzes the methylthiolation of an aspartic acid residue of ribosomal protein uS12. The protein is Ribosomal protein uS12 methylthiotransferase RimO of Citrobacter koseri (strain ATCC BAA-895 / CDC 4225-83 / SGSC4696).